The primary structure comprises 647 residues: MSIPPFSQASLEWHEGQPYSAHFGDVYFSRESGLEETRHVFLRHNQLAERWQTMQQDAFTIVETGFGTGLNFLCAWQMWEHTAPSHVRLHFVSIEKFPLSHADLARALALWPELRQYSTALLAQYHQIVPGWQRLVFCQGRVQLTLLVGDVLALLPQLSSHADAWFLDGFAPSRNPEMWQEALFDNMAAFSHKHTTFATFTSAGIVKRGLQAAGFEVHKVAGHGRKRDMLCGRFTLNERPAMRAGRAVVIGGGIAGTASSHMLAERGWQVNLVEQEPALAQHASGNPVGVLYPKLARKDVPLGRLSLAGYLHSLRLLQQLGLDATAHARCGMLQLAFDQRELERCQTIAAQGFPPELLHWVDQEQAGNIAGIALQYGALYFPEAGWVRPRAYCEALAGHANITRTLATRVTGLSQHGNAWQVWTGEQLLDEADIVVIANAAQAASFVQSRHLPLEQVRGQISRLHHVDGAPVLHALLCTDGYISPLIDGAYCLGATFVPGDTTTSVRDEEHAQNLDMLKHMAPSLYDTLMPQAPTGRAAVRCTSVDYLPLVGPVLDAALLEARPPRYTADPASSLPWLPGLYVNTGHGSKGLTTAPIAAEMLACAIHHEPAPVDSELLAVLDPNRFVLRKLGLKRLVRGLACHPLRR.

The tRNA (mnm(5)s(2)U34)-methyltransferase stretch occupies residues 1 to 235 (MSIPPFSQAS…KRDMLCGRFT (235 aa)). Residues 250–647 (IGGGIAGTAS…RGLACHPLRR (398 aa)) are FAD-dependent cmnm(5)s(2)U34 oxidoreductase.

It in the N-terminal section; belongs to the methyltransferase superfamily. tRNA (mnm(5)s(2)U34)-methyltransferase family. In the C-terminal section; belongs to the DAO family. It depends on FAD as a cofactor.

Its subcellular location is the cytoplasm. The catalysed reaction is 5-aminomethyl-2-thiouridine(34) in tRNA + S-adenosyl-L-methionine = 5-methylaminomethyl-2-thiouridine(34) in tRNA + S-adenosyl-L-homocysteine + H(+). Catalyzes the last two steps in the biosynthesis of 5-methylaminomethyl-2-thiouridine (mnm(5)s(2)U) at the wobble position (U34) in tRNA. Catalyzes the FAD-dependent demodification of cmnm(5)s(2)U34 to nm(5)s(2)U34, followed by the transfer of a methyl group from S-adenosyl-L-methionine to nm(5)s(2)U34, to form mnm(5)s(2)U34. In Methylobacillus flagellatus (strain ATCC 51484 / DSM 6875 / VKM B-1610 / KT), this protein is tRNA 5-methylaminomethyl-2-thiouridine biosynthesis bifunctional protein MnmC.